Here is a 619-residue protein sequence, read N- to C-terminus: DNA mismatch repair protein MutL (619 aa).

The protein belongs to the DNA mismatch repair MutL/HexB family.

Its function is as follows. This protein is involved in the repair of mismatches in DNA. It is required for dam-dependent methyl-directed DNA mismatch repair. May act as a 'molecular matchmaker', a protein that promotes the formation of a stable complex between two or more DNA-binding proteins in an ATP-dependent manner without itself being part of a final effector complex. In Myxococcus xanthus (strain DK1622), this protein is DNA mismatch repair protein MutL.